The following is a 342-amino-acid chain: Isopentenyl-diphosphate delta-isomerase (342 aa).

11–12 (RK) lines the substrate pocket. FMN contacts are provided by residues serine 68, 69 to 71 (SMT), serine 99, and asparagine 128. A substrate-binding site is contributed by 99-101 (SQR). Position 162 (glutamine 162) interacts with substrate. Glutamate 163 is a binding site for Mg(2+). Residues lysine 194, serine 219, threonine 224, 275 to 277 (GVR), and 296 to 297 (AK) contribute to the FMN site.

The protein belongs to the IPP isomerase type 2 family. As to quaternary structure, homooctamer. Dimer of tetramers. Requires FMN as cofactor. NADPH is required as a cofactor. It depends on Mg(2+) as a cofactor.

The protein localises to the cytoplasm. The catalysed reaction is isopentenyl diphosphate = dimethylallyl diphosphate. In terms of biological role, involved in the biosynthesis of isoprenoids. Catalyzes the 1,3-allylic rearrangement of the homoallylic substrate isopentenyl (IPP) to its allylic isomer, dimethylallyl diphosphate (DMAPP). The sequence is that of Isopentenyl-diphosphate delta-isomerase from Legionella pneumophila (strain Lens).